The chain runs to 222 residues: Eukaryotic translation initiation factor 3 subunit K (222 aa).

In terms of domain architecture, PCI spans 46–208 (YDLEANLAVL…KIKTKNITEK (163 aa)).

Belongs to the eIF-3 subunit K family. As to quaternary structure, component of the eukaryotic translation initiation factor 3 (eIF-3) complex. The eIF-3 complex interacts with pix.

The protein localises to the cytoplasm. Component of the eukaryotic translation initiation factor 3 (eIF-3) complex, which is involved in protein synthesis of a specialized repertoire of mRNAs and, together with other initiation factors, stimulates binding of mRNA and methionyl-tRNAi to the 40S ribosome. The eIF-3 complex specifically targets and initiates translation of a subset of mRNAs involved in cell proliferation. This is Eukaryotic translation initiation factor 3 subunit K from Drosophila yakuba (Fruit fly).